The primary structure comprises 459 residues: Phosphoglucosamine mutase (459 aa).

The active-site Phosphoserine intermediate is the S105. 4 residues coordinate Mg(2+): S105, D252, D254, and D256. The residue at position 105 (S105) is a Phosphoserine.

This sequence belongs to the phosphohexose mutase family. Requires Mg(2+) as cofactor. Post-translationally, activated by phosphorylation.

It catalyses the reaction alpha-D-glucosamine 1-phosphate = D-glucosamine 6-phosphate. Functionally, catalyzes the conversion of glucosamine-6-phosphate to glucosamine-1-phosphate. The protein is Phosphoglucosamine mutase of Bifidobacterium adolescentis (strain ATCC 15703 / DSM 20083 / NCTC 11814 / E194a).